Consider the following 416-residue polypeptide: Glutamyl-tRNA reductase (416 aa).

Residues 51-54, serine 110, 115-117, and glutamine 121 each bind substrate; these read TCNR and EPQ. Cysteine 52 acts as the Nucleophile in catalysis. 190 to 195 contacts NADP(+); sequence GAGQTG.

It belongs to the glutamyl-tRNA reductase family. Homodimer.

It catalyses the reaction (S)-4-amino-5-oxopentanoate + tRNA(Glu) + NADP(+) = L-glutamyl-tRNA(Glu) + NADPH + H(+). Its pathway is porphyrin-containing compound metabolism; protoporphyrin-IX biosynthesis; 5-aminolevulinate from L-glutamyl-tRNA(Glu): step 1/2. In terms of biological role, catalyzes the NADPH-dependent reduction of glutamyl-tRNA(Glu) to glutamate 1-semialdehyde (GSA). The protein is Glutamyl-tRNA reductase of Francisella tularensis subsp. tularensis (strain FSC 198).